The sequence spans 391 residues: Tryptophan synthase beta chain (391 aa).

An N6-(pyridoxal phosphate)lysine modification is found at Lys-84.

Belongs to the TrpB family. Tetramer of two alpha and two beta chains. It depends on pyridoxal 5'-phosphate as a cofactor.

The enzyme catalyses (1S,2R)-1-C-(indol-3-yl)glycerol 3-phosphate + L-serine = D-glyceraldehyde 3-phosphate + L-tryptophan + H2O. Its pathway is amino-acid biosynthesis; L-tryptophan biosynthesis; L-tryptophan from chorismate: step 5/5. Its function is as follows. The beta subunit is responsible for the synthesis of L-tryptophan from indole and L-serine. In Thermoanaerobacter pseudethanolicus (strain ATCC 33223 / 39E) (Clostridium thermohydrosulfuricum), this protein is Tryptophan synthase beta chain.